Here is a 73-residue protein sequence, read N- to C-terminus: UPF0154 protein LGAS_0795 (73 aa).

A helical membrane pass occupies residues leucine 3–tyrosine 23.

The protein belongs to the UPF0154 family.

Its subcellular location is the cell membrane. The chain is UPF0154 protein LGAS_0795 from Lactobacillus gasseri (strain ATCC 33323 / DSM 20243 / BCRC 14619 / CIP 102991 / JCM 1131 / KCTC 3163 / NCIMB 11718 / NCTC 13722 / AM63).